The primary structure comprises 150 residues: C-type lectin 16 (150 aa).

The first 27 residues, 1–27 (MKRVRVKVIFVSFGLLVVFLSLSGTAA), serve as a signal peptide directing secretion. Intrachain disulfides connect C29–C40, C57–C146, and C123–C138. The 112-residue stretch at 36–147 (YEGHCYKPFN…CRMLARFVCE (112 aa)) folds into the C-type lectin domain.

Belongs to the snaclec family. In terms of assembly, heteromultimer; disulfide-linked. As to expression, expressed by the venom gland.

Its subcellular location is the secreted. Interferes with one step of hemostasis (modulation of platelet aggregation, or coagulation cascade, for example). The polypeptide is C-type lectin 16 (Crotalus adamanteus (Eastern diamondback rattlesnake)).